A 454-amino-acid polypeptide reads, in one-letter code: Probable N-octanoylanthranilate hydrolase AqdA2 (454 aa).

The active-site Acyl-ester intermediate is serine 185. Active-site charge relay system residues include glutamate 306 and histidine 379.

It belongs to the type-B carboxylesterase/lipase family.

The enzyme catalyses N-octanoylanthranilate + H2O = anthranilate + octanoate + H(+). Its function is as follows. Involved in the degradation of the Pseudomonas aeruginosa quorum sensing signal molecules HHQ (2-heptyl-4-quinolone) and PQS (2-heptyl-3-hydroxy-4-quinolone) to anthranilic acid. Probably catalyzes the hydrolysis of N-octanoylanthranilic acid to anthranilic acid. The chain is Probable N-octanoylanthranilate hydrolase AqdA2 from Rhodococcus erythropolis (Arthrobacter picolinophilus).